Consider the following 183-residue polypeptide: 2-epi-5-epi-valiolone epimerase (183 aa).

In terms of domain architecture, VOC spans 11–155; the sequence is AVHHVAYTVP…WGMQLELINL (145 aa). The a divalent metal cation site is built by His-14, Glu-76, His-99, and Glu-151.

In terms of assembly, homodimer. Requires a divalent metal cation as cofactor.

It carries out the reaction 2-epi-5-epi-valiolone = 5-epi-valiolone. It participates in antibiotic biosynthesis. Its function is as follows. Catalyzes the epimerization of 2-epi-5-epi-valiolone to 5-epi-valiolone. Involved in cetoniacytone A biosynthesis. This Actinomyces sp protein is 2-epi-5-epi-valiolone epimerase.